The sequence spans 273 residues: Dermonecrotic toxin SdSicTox-betaIIB1bxi (273 aa).

Histidine 4 is a catalytic residue. Residues glutamate 24 and aspartate 26 each contribute to the Mg(2+) site. Histidine 40 functions as the Nucleophile in the catalytic mechanism. Intrachain disulfides connect cysteine 44–cysteine 50 and cysteine 46–cysteine 189. Mg(2+) is bound at residue aspartate 84.

The protein belongs to the arthropod phospholipase D family. Class II subfamily. Mg(2+) serves as cofactor. Expressed by the venom gland.

The protein resides in the secreted. The catalysed reaction is an N-(acyl)-sphingosylphosphocholine = an N-(acyl)-sphingosyl-1,3-cyclic phosphate + choline. It catalyses the reaction an N-(acyl)-sphingosylphosphoethanolamine = an N-(acyl)-sphingosyl-1,3-cyclic phosphate + ethanolamine. The enzyme catalyses a 1-acyl-sn-glycero-3-phosphocholine = a 1-acyl-sn-glycero-2,3-cyclic phosphate + choline. It carries out the reaction a 1-acyl-sn-glycero-3-phosphoethanolamine = a 1-acyl-sn-glycero-2,3-cyclic phosphate + ethanolamine. Functionally, dermonecrotic toxins cleave the phosphodiester linkage between the phosphate and headgroup of certain phospholipids (sphingolipid and lysolipid substrates), forming an alcohol (often choline) and a cyclic phosphate. This toxin acts on sphingomyelin (SM). It may also act on ceramide phosphoethanolamine (CPE), lysophosphatidylcholine (LPC) and lysophosphatidylethanolamine (LPE), but not on lysophosphatidylserine (LPS), and lysophosphatidylglycerol (LPG). It acts by transphosphatidylation, releasing exclusively cyclic phosphate products as second products. Induces dermonecrosis, hemolysis, increased vascular permeability, edema, inflammatory response, and platelet aggregation. This Sicarius cf. damarensis (strain GJB-2008) (Six-eyed sand spider) protein is Dermonecrotic toxin SdSicTox-betaIIB1bxi.